A 193-amino-acid polypeptide reads, in one-letter code: MAKKQNILSPIIRITFTFLVLCGLVYPLIVTGIAQAVMKDNADGSLIYNDKNEVIGSTLIGQNFTDPRYFHGRVSSIEYKAEASGSNNYAPSNPDLEKRVEKSIEEWKKQNPSVPVTEVPIDLVTNSGSGLDPDISPKAASVQVERISKLTNIPKETLDQLIKDQTEGAALGLFGETRVNVLKLNLELQKIMK.

The chain crosses the membrane as a helical span at residues 14–34 (ITFTFLVLCGLVYPLIVTGIA).

Belongs to the KdpC family. As to quaternary structure, the system is composed of three essential subunits: KdpA, KdpB and KdpC.

The protein resides in the cell membrane. Functionally, part of the high-affinity ATP-driven potassium transport (or Kdp) system, which catalyzes the hydrolysis of ATP coupled with the electrogenic transport of potassium into the cytoplasm. This subunit acts as a catalytic chaperone that increases the ATP-binding affinity of the ATP-hydrolyzing subunit KdpB by the formation of a transient KdpB/KdpC/ATP ternary complex. The polypeptide is Potassium-transporting ATPase KdpC subunit (Bacillus thuringiensis subsp. konkukian (strain 97-27)).